We begin with the raw amino-acid sequence, 247 residues long: Flagellar brake protein YcgR 2 (247 aa).

The 114-residue stretch at 124–237 (QRREYFRVET…DETRIQRYIA (114 aa)) folds into the PilZ domain.

The protein belongs to the YcgR family. In terms of assembly, monomer. Interacts with the flagellar basal bodies.

The protein localises to the bacterial flagellum basal body. In terms of biological role, acts as a flagellar brake, regulating swimming and swarming in a bis-(3'-5') cyclic diguanylic acid (c-di-GMP)-dependent manner. Binds 1 c-di-GMP dimer per subunit. Increasing levels of c-di-GMP lead to decreased motility. This is Flagellar brake protein YcgR 2 from Dechloromonas aromatica (strain RCB).